The sequence spans 130 residues: Large ribosomal subunit protein bL20c (130 aa).

This sequence belongs to the bacterial ribosomal protein bL20 family.

The protein localises to the plastid. Its subcellular location is the chloroplast. In terms of biological role, binds directly to 23S ribosomal RNA and is necessary for the in vitro assembly process of the 50S ribosomal subunit. It is not involved in the protein synthesizing functions of that subunit. This Fagopyrum esculentum subsp. ancestrale (Wild buckwheat) protein is Large ribosomal subunit protein bL20c.